A 341-amino-acid chain; its full sequence is ATP-dependent 6-phosphofructokinase 3 (341 aa).

Residues Gly-10, 72–73 (RV), and 102–105 (GEGT) contribute to the ATP site. Glu-103 lines the Mg(2+) pocket. Substrate is bound by residues 125–127 (TID), Arg-162, 169–171 (MGR), Glu-222, Arg-266, and 272–275 (HVQR). The active-site Proton acceptor is the Asp-127.

Belongs to the phosphofructokinase type A (PFKA) family. Mixed-substrate PFK group III subfamily. In terms of assembly, homodimer or homotetramer. It depends on Mg(2+) as a cofactor.

It localises to the cytoplasm. The enzyme catalyses beta-D-fructose 6-phosphate + ATP = beta-D-fructose 1,6-bisphosphate + ADP + H(+). The protein operates within carbohydrate degradation; glycolysis; D-glyceraldehyde 3-phosphate and glycerone phosphate from D-glucose: step 3/4. Functionally, catalyzes the phosphorylation of D-fructose 6-phosphate to fructose 1,6-bisphosphate by ATP, the first committing step of glycolysis. In Streptomyces coelicolor (strain ATCC BAA-471 / A3(2) / M145), this protein is ATP-dependent 6-phosphofructokinase 3.